The sequence spans 138 residues: Basic phospholipase A2 BP-II (138 aa).

The N-terminal stretch at 1 to 16 (MRTLWIMAVLLVGVDG) is a signal peptide. 7 disulfides stabilise this stretch: Cys42/Cys132, Cys44/Cys60, Cys59/Cys112, Cys65/Cys138, Cys66/Cys105, Cys73/Cys98, and Cys91/Cys103. Positions 45 and 47 each coordinate Ca(2+). His63 is an active-site residue. Residue Asp106 is part of the active site.

The protein belongs to the phospholipase A2 family. Group II subfamily. K49 sub-subfamily. As to quaternary structure, exists as a monomer in both solution and crystal states. In the presence of SDS or probably in the presence of phospholipids, assembles to form SDS-resistant stable oligomers. Ca(2+) serves as cofactor. In terms of tissue distribution, expressed by the venom gland.

Its subcellular location is the secreted. It catalyses the reaction a 1,2-diacyl-sn-glycero-3-phosphocholine + H2O = a 1-acyl-sn-glycero-3-phosphocholine + a fatty acid + H(+). In terms of biological role, snake venom phospholipase A2 (PLA2) that shows anticoagulant activities, strong myolytic activity, infiltration of polymorphonuclear cells, and edema in stromal tissues. Induces cell death of Jurkat cells in a concentration-dependent manner. Shows a low phospholipase A2 activity. PLA2 catalyzes the calcium-dependent hydrolysis of the 2-acyl groups in 3-sn-phosphoglycerides. This is Basic phospholipase A2 BP-II from Protobothrops flavoviridis (Habu).